Here is a 148-residue protein sequence, read N- to C-terminus: Leghemoglobin 3 (148 aa).

The 147-residue stretch at 2-148 folds into the Globin domain; that stretch reads GFTEKQEALV…LSAAIKKAMS (147 aa). Y30 carries the post-translational modification Nitrated tyrosine. S45 provides a ligand contact to heme b. Position 45 is a phosphoserine (S45). H63 is an O2 binding site. Residues K66, H95, and K98 each coordinate heme b. A Nitrated tyrosine modification is found at Y136.

Belongs to the plant globin family. In terms of assembly, monomer. Post-translationally, nitrated in effective nodules and particularly in hypoxic conditions; this mechanism may play a protective role in the symbiosis by buffering toxic peroxynitrite NO(2)(-). Nitration level decrease during nodule senescence. Phosphorylation at Ser-45 disrupts the molecular environment of its porphyrin ring oxygen binding pocket, thus leading to a reduced oxygen consumption and to the delivery of oxygen O(2) to symbiosomes. As to expression, stem nodules.

The protein localises to the cytoplasm. It localises to the cytosol. Its subcellular location is the nucleus. Its function is as follows. Leghemoglobin that reversibly binds oxygen O(2) through a pentacoordinated heme iron. In stem nodules, facilitates the diffusion of oxygen to the bacteroids while preventing the bacterial nitrogenase from being inactivated by buffering dioxygen, nitric oxide and carbon monoxide, and promoting the formation of reactive oxygen species (ROS, e.g. H(2)O(2)). This role is essential for symbiotic nitrogen fixation (SNF). The polypeptide is Leghemoglobin 3 (Sesbania rostrata).